Here is a 123-residue protein sequence, read N- to C-terminus: Small ribosomal subunit protein uS12 (123 aa).

The residue at position 89 (Asp89) is a 3-methylthioaspartic acid.

This sequence belongs to the universal ribosomal protein uS12 family. In terms of assembly, part of the 30S ribosomal subunit. Contacts proteins S8 and S17. May interact with IF1 in the 30S initiation complex.

Functionally, with S4 and S5 plays an important role in translational accuracy. In terms of biological role, interacts with and stabilizes bases of the 16S rRNA that are involved in tRNA selection in the A site and with the mRNA backbone. Located at the interface of the 30S and 50S subunits, it traverses the body of the 30S subunit contacting proteins on the other side and probably holding the rRNA structure together. The combined cluster of proteins S8, S12 and S17 appears to hold together the shoulder and platform of the 30S subunit. The sequence is that of Small ribosomal subunit protein uS12 from Gluconobacter oxydans (strain 621H) (Gluconobacter suboxydans).